Reading from the N-terminus, the 658-residue chain is MFNLSLHGDPYPQQPGHLQLSWLDRMGERVRLAWMRHKQVNGWVLGRMAKRVLKAQTERESMTPEALREDLQRLTLALRRDGLEDALVEQAFAHVRLTAQRVLGMAHFPVQLKGGYIMLMGYLAEMDTGEGKTLTATLPAATAALAGFTVHVVTVNEYLARRDAQLMTPLYRALGVTTGVVTESMDSDEKQLGYRANVVYCTSKTLVFDYLRDRIQLGERMKPMAMAFDALVGGGRGQVMLQGLQYAIVDEADSIFVDEARTPLIISAPSKDASELAFLHTAWSLSQQLQQGQDYTLSGEEPPRITEAGSAQLAQLCVDLPPVWQGQHRREEAVAQALTAQHSFDRDVHYIIRDDKVMVVDETTGRVMPDRAWERGLQQLIEIKEGVAVTPPKETLAKISFQLFFRRFLRLSGMSGTCREVGGEIAEVYGLGVVRVAPNRPSKRKNLPIALYAWRAQADAAVVQAVRRCHMLGQPVLVGTRSIAASELLSQSFSEAGLPHRVLNAKQDQEENTIIAEAGYKGGITIATNMAGRGTDIKLSKEVQACGGLHVILTERHDNRRVDRQLAGRCARQGDPGSWQEILSLEDELTQKFLPLLGRTLRAWLALMPHFFLARWLGMVYYRWAQSYADRGHRRVRRQLMKTDFQLRQSLSFTGEME.

ATP-binding positions include Gln111, 129 to 133 (GEGKT), and Asp536.

Belongs to the SecA family. Monomer and homodimer. Part of the essential Sec protein translocation apparatus which comprises SecA, SecYEG and auxiliary proteins SecDF-YajC and YidC.

It localises to the cell inner membrane. It is found in the cytoplasm. It catalyses the reaction ATP + H2O + cellular proteinSide 1 = ADP + phosphate + cellular proteinSide 2.. Functionally, part of the Sec protein translocase complex. Interacts with the SecYEG preprotein conducting channel. Has a central role in coupling the hydrolysis of ATP to the transfer of proteins into and across the cell membrane, serving both as a receptor for the preprotein-SecB complex and as an ATP-driven molecular motor driving the stepwise translocation of polypeptide chains across the membrane. The sequence is that of Protein translocase subunit SecA 3 from Magnetococcus marinus (strain ATCC BAA-1437 / JCM 17883 / MC-1).